The sequence spans 513 residues: Cobyric acid synthase (513 aa).

The GATase cobBQ-type domain occupies 252–457 (KIDIAVIRLP…LHGIFDEEGI (206 aa)). The Nucleophile role is filled by Cys333. Residue His449 is part of the active site.

It belongs to the CobB/CobQ family. CobQ subfamily.

The protein operates within cofactor biosynthesis; adenosylcobalamin biosynthesis. Functionally, catalyzes amidations at positions B, D, E, and G on adenosylcobyrinic A,C-diamide. NH(2) groups are provided by glutamine, and one molecule of ATP is hydrogenolyzed for each amidation. In Lachnoclostridium phytofermentans (strain ATCC 700394 / DSM 18823 / ISDg) (Clostridium phytofermentans), this protein is Cobyric acid synthase.